A 407-amino-acid chain; its full sequence is Arrestin homolog (407 aa).

This sequence belongs to the arrestin family.

The polypeptide is Arrestin homolog (Locusta migratoria (Migratory locust)).